Here is a 630-residue protein sequence, read N- to C-terminus: FAST kinase domain-containing protein 4 (630 aa).

The RAP domain maps to 560 to 618; it reads IAFLRWEFPNFNSRSKDLLGRFVLARRHVLAAGFLVVDVPYYEWLDLKSEWQKSAYLKD.

This sequence belongs to the FAST kinase family. As to expression, expression detected in spleen, testis, colon, heart, smooth muscle, kidney, brain, lung, liver, brown and white adipose tissue with highest expression in testis, heart, smooth muscle and brown adipose tissue.

The protein resides in the mitochondrion matrix. Plays a role in processing of mitochondrial RNA precursors and in stabilization of a subset of mature mitochondrial RNA species, such as MT-CO1, MT-CO2, MT-CYB, MT-CO3, MT-ND3, MT-ND5 and MT-ATP8/6. May play a role in cell cycle progression. This chain is FAST kinase domain-containing protein 4 (Tbrg4), found in Mus musculus (Mouse).